A 53-amino-acid chain; its full sequence is MRNLHHLRVGHEAHSTHHLWMWKHLRRRAISELRILRNFIRKCIRGGVFLWII.

This is an uncharacterized protein from Saccharomyces cerevisiae (strain ATCC 204508 / S288c) (Baker's yeast).